The chain runs to 1100 residues: Conjugal transfer protein TraA (1100 aa).

404-411 contacts ATP; sequence GRAGAGKT.

Belongs to the MobA/MobL family.

In Rhizobium radiobacter (Agrobacterium tumefaciens), this protein is Conjugal transfer protein TraA (traA).